The following is a 470-amino-acid chain: Macrophage metalloelastase (470 aa).

An N-terminal signal peptide occupies residues 1-16; that stretch reads MKFLLILLLQATASGA. A propeptide spans 17–105 (activation peptide); the sequence is LPLNSSTSLE…DVHHFREMPG (89 aa). N20 is a glycosylation site (N-linked (GlcNAc...) asparagine). Residues 90–97 carry the Cysteine switch motif; the sequence is PRCGVPDV. C92 is a binding site for Zn(2+). Ca(2+)-binding residues include D124 and D158. Zn(2+)-binding residues include H168 and D170. D175, G176, G178, and I180 together coordinate Ca(2+). H183 contacts Zn(2+). G190, G192, and D194 together coordinate Ca(2+). Residue H196 participates in Zn(2+) binding. 3 residues coordinate Ca(2+): D198, E199, and E201. H218 contributes to the Zn(2+) binding site. E219 is an active-site residue. Zn(2+) contacts are provided by H222 and H228. Hemopexin repeat units follow at residues 279–328, 329–375, 377–425, and 426–470; these read PALC…WPTL, PSGI…GFPN, VKKI…FQGI, and GPKI…WFGC. A disulfide bridge connects residues C282 and C470. N285 is a glycosylation site (N-linked (GlcNAc...) asparagine). Ca(2+) contacts are provided by D289, E333, D381, and D430.

This sequence belongs to the peptidase M10A family. Ca(2+) is required as a cofactor. It depends on Zn(2+) as a cofactor. In terms of tissue distribution, found in alveolar macrophages but not in peripheral blood monocytes.

The protein resides in the secreted. The protein localises to the extracellular space. Its subcellular location is the extracellular matrix. The catalysed reaction is Hydrolysis of soluble and insoluble elastin. Specific cleavages are also produced at 14-Ala-|-Leu-15 and 16-Tyr-|-Leu-17 in the B chain of insulin.. Its function is as follows. May be involved in tissue injury and remodeling. Has significant elastolytic activity. Can accept large and small amino acids at the P1' site, but has a preference for leucine. Aromatic or hydrophobic residues are preferred at the P1 site, with small hydrophobic residues (preferably alanine) occupying P3. This is Macrophage metalloelastase (MMP12) from Homo sapiens (Human).